A 192-amino-acid polypeptide reads, in one-letter code: Potassium-transporting ATPase KdpC subunit (192 aa).

The helical transmembrane segment at 7–27 threads the bilayer; that stretch reads PLIVIFAVLTAVTGLAYPAVM.

It belongs to the KdpC family. As to quaternary structure, the system is composed of three essential subunits: KdpA, KdpB and KdpC.

It is found in the cell inner membrane. Part of the high-affinity ATP-driven potassium transport (or Kdp) system, which catalyzes the hydrolysis of ATP coupled with the electrogenic transport of potassium into the cytoplasm. This subunit acts as a catalytic chaperone that increases the ATP-binding affinity of the ATP-hydrolyzing subunit KdpB by the formation of a transient KdpB/KdpC/ATP ternary complex. The chain is Potassium-transporting ATPase KdpC subunit from Paraburkholderia phytofirmans (strain DSM 17436 / LMG 22146 / PsJN) (Burkholderia phytofirmans).